A 596-amino-acid polypeptide reads, in one-letter code: Dihydroxy-acid dehydratase pbrD, mitochondrial (596 aa).

Residues 1–18 constitute a mitochondrion transit peptide; sequence MATSSIRSRALGLSRRAR. Residue cysteine 84 participates in [2Fe-2S] cluster binding. Aspartate 116 contacts Mg(2+). Position 157 (cysteine 157) interacts with [2Fe-2S] cluster. Aspartate 158 is a binding site for Mg(2+). Residue cysteine 230 participates in [2Fe-2S] cluster binding. Residue glutamate 483 coordinates Mg(2+). The active-site Proton acceptor is serine 509.

It belongs to the IlvD/Edd family. The cofactor is [2Fe-2S] cluster. Requires Mg(2+) as cofactor.

The protein localises to the mitochondrion. It carries out the reaction (2R)-2,3-dihydroxy-3-methylbutanoate = 3-methyl-2-oxobutanoate + H2O. It catalyses the reaction (2R,3R)-2,3-dihydroxy-3-methylpentanoate = (S)-3-methyl-2-oxopentanoate + H2O. It participates in amino-acid biosynthesis; L-isoleucine biosynthesis; L-isoleucine from 2-oxobutanoate: step 3/4. Its pathway is amino-acid biosynthesis; L-valine biosynthesis; L-valine from pyruvate: step 3/4. With respect to regulation, DHAD activity is not inhibited by the dihydroxyacid dehydratase inhibitor aspterric acid (AA). Its function is as follows. Dihydroxyacid dehydratase; part of the gene cluster that mediates the biosynthesis of the sesquiterpenoid aspterric acid (AA), an inhibitor of dihydroxy-acid dehydratase (DHAD) effective as an herbicide. Performs the third step in the common pathway leading to biosynthesis of branched-chain amino acids. Catalyzes the dehydration of (2R,3R)-2,3-dihydroxy-3-methylpentanoate (2,3-dihydroxy-3-methylvalerate) into 2-oxo-3-methylpentanoate (2-oxo-3-methylvalerate) and of (2R)-2,3-dihydroxy-3-methylbutanoate (2,3-dihydroxyisovalerate) into 2-oxo-3-methylbutanoate (2-oxoisovalerate), the penultimate precursor to L-isoleucine and L-valine, respectively. PbrD confers self-resistance in the presence of the dihydroxyacid dehydratase inhibitor aspterric acid (AA) produced by the ast cluster. The polypeptide is Dihydroxy-acid dehydratase pbrD, mitochondrial (Penicillium brasilianum).